We begin with the raw amino-acid sequence, 239 residues long: Thymidylate kinase (239 aa).

10 to 17 (GINGVGKS) lines the ATP pocket.

This sequence belongs to the thymidylate kinase family.

It catalyses the reaction dTMP + ATP = dTDP + ADP. Its pathway is pyrimidine metabolism; dTTP biosynthesis. In terms of biological role, catalyzes the conversion of dTMP to dTDP. The sequence is that of Thymidylate kinase (TMK) from African swine fever virus (isolate Warthog/Namibia/Wart80/1980) (ASFV).